The chain runs to 216 residues: Uridine kinase (216 aa).

ATP is bound at residue 16–23 (GASASGKS).

It belongs to the uridine kinase family.

It localises to the cytoplasm. The enzyme catalyses uridine + ATP = UMP + ADP + H(+). The catalysed reaction is cytidine + ATP = CMP + ADP + H(+). It functions in the pathway pyrimidine metabolism; CTP biosynthesis via salvage pathway; CTP from cytidine: step 1/3. Its pathway is pyrimidine metabolism; UMP biosynthesis via salvage pathway; UMP from uridine: step 1/1. The sequence is that of Uridine kinase from Mannheimia succiniciproducens (strain KCTC 0769BP / MBEL55E).